The chain runs to 217 residues: tRNA (guanine-N(7)-)-methyltransferase (217 aa).

Glu48, Glu73, Asn100, and Asp123 together coordinate S-adenosyl-L-methionine. Asp123 is an active-site residue. Substrate contacts are provided by Lys127 and Asp159.

The protein belongs to the class I-like SAM-binding methyltransferase superfamily. TrmB family.

It carries out the reaction guanosine(46) in tRNA + S-adenosyl-L-methionine = N(7)-methylguanosine(46) in tRNA + S-adenosyl-L-homocysteine. It participates in tRNA modification; N(7)-methylguanine-tRNA biosynthesis. Its function is as follows. Catalyzes the formation of N(7)-methylguanine at position 46 (m7G46) in tRNA. The sequence is that of tRNA (guanine-N(7)-)-methyltransferase from Leptospira borgpetersenii serovar Hardjo-bovis (strain JB197).